The following is a 261-amino-acid chain: Pantothenate synthetase (261 aa).

29–36 (MGALHNGH) is a binding site for ATP. H36 functions as the Proton donor in the catalytic mechanism. A (R)-pantoate-binding site is contributed by Q60. A beta-alanine-binding site is contributed by Q60. 147–150 (GEKD) is an ATP binding site. Q153 is a (R)-pantoate binding site. ATP is bound at residue 184-187 (LSSR).

Belongs to the pantothenate synthetase family. As to quaternary structure, homodimer.

The protein localises to the cytoplasm. It carries out the reaction (R)-pantoate + beta-alanine + ATP = (R)-pantothenate + AMP + diphosphate + H(+). The protein operates within cofactor biosynthesis; (R)-pantothenate biosynthesis; (R)-pantothenate from (R)-pantoate and beta-alanine: step 1/1. Functionally, catalyzes the condensation of pantoate with beta-alanine in an ATP-dependent reaction via a pantoyl-adenylate intermediate. The chain is Pantothenate synthetase from Francisella philomiragia subsp. philomiragia (strain ATCC 25017 / CCUG 19701 / FSC 153 / O#319-036).